A 578-amino-acid chain; its full sequence is Kelch-like protein 30 (578 aa).

The BTB domain occupies 33-100; that stretch reads ADVTLLVGGR…VYTGRLTITQ (68 aa). The BACK domain maps to 153-255; that stretch reads KAWAFLRENF…EACRAALSQG (103 aa). Kelch repeat units lie at residues 270–326, 327–377, 378–422, 424–471, 473–513, and 514–563; these read VLVV…ALNN, NIYV…ALNG, EIYV…GCRG, LYLV…ALHG, LYLI…PLGD, and ALYV…TVFL.

The polypeptide is Kelch-like protein 30 (KLHL30) (Homo sapiens (Human)).